Reading from the N-terminus, the 576-residue chain is Arginine--tRNA ligase (576 aa).

The 'HIGH' region signature appears at 126-136; that stretch reads ANPTGPMHIGH.

The protein belongs to the class-I aminoacyl-tRNA synthetase family. Monomer.

The protein resides in the cytoplasm. It catalyses the reaction tRNA(Arg) + L-arginine + ATP = L-arginyl-tRNA(Arg) + AMP + diphosphate. This is Arginine--tRNA ligase from Rickettsia bellii (strain OSU 85-389).